Reading from the N-terminus, the 637-residue chain is Zinc-transporting ATPase (637 aa).

4 helical membrane passes run 43–63 (GWLL…AFVI), 89–109 (IFAA…ILIF), 258–278 (GVLI…GWSW), and 286–306 (MVFM…PAAL). Asp-337 (4-aspartylphosphate intermediate) is an active-site residue. Mg(2+) contacts are provided by Asp-535 and Asp-539. A helical transmembrane segment spans residues 599-619 (VICLLICANFLQAMELPFGVI).

The protein belongs to the cation transport ATPase (P-type) (TC 3.A.3) family. Type IB subfamily.

It localises to the cell membrane. It catalyses the reaction Zn(2+)(out) + ATP(in) + H2O(in) = Zn(2+)(in) + ADP(in) + phosphate(in) + H(+)(in). In terms of biological role, couples the hydrolysis of ATP with the transport of zinc into the cell. Plays an important role in protecting cells against oxidative stress. ZosA-mediated zinc transport is required for post-transcriptional control of comK and competence development. The chain is Zinc-transporting ATPase (zosA) from Bacillus subtilis (strain 168).